A 715-amino-acid chain; its full sequence is NADH-ubiquinone oxidoreductase chain 5 (715 aa).

Transmembrane regions (helical) follow at residues M1–R21, L30–V50, L81–I101, L119–G139, W140–A160, F177–V197, L200–A220, T241–M261, L274–F294, L310–I330, N331–A351, L366–M386, F403–L423, G487–I507, T543–L563, I647–I667, and S668–T688.

It belongs to the complex I subunit 5 family.

The protein localises to the mitochondrion inner membrane. It catalyses the reaction a ubiquinone + NADH + 5 H(+)(in) = a ubiquinol + NAD(+) + 4 H(+)(out). Its function is as follows. Core subunit of the mitochondrial membrane respiratory chain NADH dehydrogenase (Complex I) that is believed to belong to the minimal assembly required for catalysis. Complex I functions in the transfer of electrons from NADH to the respiratory chain. The immediate electron acceptor for the enzyme is believed to be ubiquinone. The sequence is that of NADH-ubiquinone oxidoreductase chain 5 (ndh-5) from Neurospora crassa (strain ATCC 24698 / 74-OR23-1A / CBS 708.71 / DSM 1257 / FGSC 987).